Here is a 431-residue protein sequence, read N- to C-terminus: Divergent protein kinase domain 1B (431 aa).

The Cytoplasmic portion of the chain corresponds to 1 to 30; that stretch reads MRRLRRLAHLVLFCPFSKRLQGRLPGLRVR. A May mediate ER retention motif is present at residues 5-6; sequence RR. The chain crosses the membrane as a helical span at residues 31–51; that stretch reads CIFLAWLGVFAGSWLVYVHYS. The Lumenal segment spans residues 52–431; sequence SYSERCRGHV…WKKISNTKYS (380 aa). 2 disulfide bridges follow: cysteine 57/cysteine 94 and cysteine 62/cysteine 117.

This sequence belongs to the DIPK family. Among the many cysteines in the lumenal domain, most are probably involved in disulfide bonds.

Its subcellular location is the endoplasmic reticulum membrane. The protein is Divergent protein kinase domain 1B of Homo sapiens (Human).